Reading from the N-terminus, the 199-residue chain is CASP-like protein 2B1 (199 aa).

Over 1-26 (MSYLGVGLSPVNVAGTKMKLMDRKVR) the chain is Cytoplasmic. A helical transmembrane segment spans residues 27–47 (LTELILRCSVCALALVAAILI). Residues 48 to 69 (ATDTQVKEIFTIQKKAKYTDMK) are Extracellular-facing. A helical membrane pass occupies residues 70 to 90 (ALVFLVVVNGIAAAYSLLHMV). At 91–106 (RCVVGMMKGSVLFSKP) the chain is on the cytoplasmic side. The chain crosses the membrane as a helical span at residues 107 to 127 (LAWAIFSGDQAIAYLTVAGVA). Residues 128–164 (AAAQSAAFAKLGEPELQWMKICTIYGKFCNQVGEGIA) are Extracellular-facing. A helical transmembrane segment spans residues 165–185 (TALLASIGMVLISSISAFALF). Topologically, residues 186–199 (RLYGGNKAQQGSRW) are cytoplasmic.

It belongs to the Casparian strip membrane proteins (CASP) family. In terms of assembly, homodimer and heterodimers.

It localises to the cell membrane. The protein is CASP-like protein 2B1 of Eutrema halophilum (Salt cress).